Consider the following 502-residue polypeptide: Protein DETOXIFICATION 49 (502 aa).

12 helical membrane passes run 41–61, 75–95, 123–143, 153–173, 190–210, 216–236, 267–287, 293–313, 338–358, 372–392, 414–434, and 439–459; these read LPLI…MLFL, LALG…SIGM, LLCS…LLFF, AEIF…LHPI, AFFA…SLGL, ALGA…YIVF, VSVC…GLLL, VASM…PSSL, RTGL…ALMV, IVKL…GNCP, LCCF…FSGF, and LWLG…VVLA.

Belongs to the multi antimicrobial extrusion (MATE) (TC 2.A.66.1) family.

The protein localises to the membrane. The sequence is that of Protein DETOXIFICATION 49 from Arabidopsis thaliana (Mouse-ear cress).